Consider the following 628-residue polypeptide: Chaperone protein HtpG (628 aa).

The segment at 1-337 (MSEKKYTFET…SADLPLNVSR (337 aa)) is a; substrate-binding. Residues 338–554 (EILQHNKVID…DYGMSLHMQK (217 aa)) form a b region. Residues 555-628 (MMEEAGQSFM…FVKLVNKYIR (74 aa)) are c.

This sequence belongs to the heat shock protein 90 family. As to quaternary structure, homodimer.

It is found in the cytoplasm. Functionally, molecular chaperone. Has ATPase activity. The protein is Chaperone protein HtpG of Francisella tularensis subsp. tularensis (strain FSC 198).